The primary structure comprises 209 residues: Uracil phosphoribosyltransferase (209 aa).

Residues Arg-79, Arg-104, and 131 to 139 (DPMLATGNS) contribute to the 5-phospho-alpha-D-ribose 1-diphosphate site. Uracil contacts are provided by residues Ile-194 and 199–201 (GDA). Residue Asp-200 participates in 5-phospho-alpha-D-ribose 1-diphosphate binding.

The protein belongs to the UPRTase family. It depends on Mg(2+) as a cofactor.

It catalyses the reaction UMP + diphosphate = 5-phospho-alpha-D-ribose 1-diphosphate + uracil. It functions in the pathway pyrimidine metabolism; UMP biosynthesis via salvage pathway; UMP from uracil: step 1/1. Allosterically activated by GTP. Its function is as follows. Catalyzes the conversion of uracil and 5-phospho-alpha-D-ribose 1-diphosphate (PRPP) to UMP and diphosphate. The polypeptide is Uracil phosphoribosyltransferase (Delftia acidovorans (strain DSM 14801 / SPH-1)).